The sequence spans 758 residues: Ferrichrome receptor FcuA (758 aa).

An N-terminal signal peptide occupies residues 1–36 (MNQTISSRAPQKRLAPRLLCVMIGAALGTLSASSWA). A TonB box motif is present at residues 66 to 73 (DTITVVGA). Residues 106–216 (DARNVPFNVI…VGGMINLEPK (111 aa)) form the TBDR plug domain. The TBDR beta-barrel domain maps to 221–758 (TPLTRVTVDY…ALKLSVSMDF (538 aa)). The short motif at 741–758 (YIYQGDPRALKLSVSMDF) is the TonB C-terminal box element.

Belongs to the TonB-dependent receptor family.

It is found in the cell outer membrane. Receptor for the hydroxamate siderophore, ferrichrome. Binds also to most other ferrichrome derivatives except enantio ferrichrome and ferric rhodotorulate. This Yersinia enterocolitica protein is Ferrichrome receptor FcuA (fcuA).